Reading from the N-terminus, the 110-residue chain is ATP-dependent Clp protease adapter protein ClpS (110 aa).

This sequence belongs to the ClpS family. Binds to the N-terminal domain of the chaperone ClpA.

Functionally, involved in the modulation of the specificity of the ClpAP-mediated ATP-dependent protein degradation. The protein is ATP-dependent Clp protease adapter protein ClpS of Bartonella quintana (strain Toulouse) (Rochalimaea quintana).